Consider the following 306-residue polypeptide: Glutathione transport system permease protein GsiC (306 aa).

Over 1-8 the chain is Cytoplasmic; sequence MLNYVIKR. The helical transmembrane segment at 9–29 threads the bilayer; it reads LLGLIPTLFIVSVLVFLFVHM. Over 30-102 the chain is Periplasmic; the sequence is LPGDPARLIA…SRFMPTLWLT (73 aa). One can recognise an ABC transmembrane type-1 domain in the interval 95–292; sequence FMPTLWLTIT…LEFILINLVV (198 aa). Residues 103–123 form a helical membrane-spanning segment; it reads ITSMVWAVIFGMAAGIIAAVW. Residues 124 to 134 lie on the Cytoplasmic side of the membrane; it reads RNRWPDRLSMT. Residues 135–155 form a helical membrane-spanning segment; the sequence is IAVSGISFPAFALGMLLIQVF. At 156 to 168 the chain is on the periplasmic side; the sequence is SVELGWLPTVGAD. Residues 169–189 traverse the membrane as a helical segment; the sequence is SWQHYILSSLTLGAAVAAVMA. Residues 190–228 are Cytoplasmic-facing; that stretch reads RFTRASFVDVLSEDYMRTARAKGVSETWVVLKHGLRNAM. The chain crosses the membrane as a helical span at residues 229–249; it reads IPVVTMMGLQFGFLLGGSIVV. Residues 250-277 lie on the Periplasmic side of the membrane; that stretch reads EKVFNWPGLGRLLVDSVEMRDYPVIQAE. A helical transmembrane segment spans residues 278-298; sequence ILLFSLEFILINLVVDVLYAA. Over 299 to 306 the chain is Cytoplasmic; it reads INPAIRYK.

This sequence belongs to the binding-protein-dependent transport system permease family. In terms of assembly, the complex is composed of two ATP-binding proteins (GsiA), two transmembrane proteins (GsiC and GsiD) and a solute-binding protein (GsiB).

It localises to the cell inner membrane. In terms of biological role, part of the ABC transporter complex GsiABCD involved in glutathione import. Probably responsible for the translocation of the substrate across the membrane. The chain is Glutathione transport system permease protein GsiC from Shigella boydii serotype 4 (strain Sb227).